Reading from the N-terminus, the 208-residue chain is Large ribosomal subunit protein uL4 (208 aa).

Residues 44-79 form a disordered region; it reads QRQGTHKSKERSEISGSTRKIGRQKGGGGARRGDMN.

It belongs to the universal ribosomal protein uL4 family. Part of the 50S ribosomal subunit.

Functionally, one of the primary rRNA binding proteins, this protein initially binds near the 5'-end of the 23S rRNA. It is important during the early stages of 50S assembly. It makes multiple contacts with different domains of the 23S rRNA in the assembled 50S subunit and ribosome. Its function is as follows. Forms part of the polypeptide exit tunnel. The sequence is that of Large ribosomal subunit protein uL4 from Bacteroides fragilis (strain YCH46).